The chain runs to 413 residues: MSTVIATYLLHDEKDIRKKAEGIALGLTVGTWTDLPALEQEQLRKHKGEVVGIEELGESGPANEYFDKRLKRAIVKIAYPTVNFSADLPALLATTFGKLSLDGEVRLLDLELSDEWKRHFPGPRFGIAGIREKVGVYDRPLLMSIFKGIIGRDLAYLTSELKKQALGGVDLVKDDEILFDNELLPFEKRITAGKAALQEVYEQTGKRTLYAVNLTGKTFELKEKAKRAAELGADVLLFNVFTYGLDVLQGLREDENINVPIMAHPAFSGAMTPSEFYGVAPSLLLGKFLRLAGADFVLFPSPYGSVALEREQALGIARALTDEQEPFARAFPVPSAGIHPGLVPLLVRDFGLDCIVNAGGGIHGHPDGAIGGGQAFRAAIDAALAGRLLREAVKENEALQKAIDRWGAIEVEA.

K98 serves as the catalytic Proton acceptor. Residues K147, 173 to 176 (KDDE), H264, G337, and 359 to 360 (GG) contribute to the substrate site. Positions 173, 175, and 176 each coordinate Mg(2+). K173 is modified (N6-carboxylysine).

It belongs to the RuBisCO large chain family. Type IV subfamily. Homodimer. It depends on Mg(2+) as a cofactor.

It catalyses the reaction 5-methylsulfanyl-2,3-dioxopentyl phosphate = 2-hydroxy-5-methylsulfanyl-3-oxopent-1-enyl phosphate. It participates in amino-acid biosynthesis; L-methionine biosynthesis via salvage pathway; L-methionine from S-methyl-5-thio-alpha-D-ribose 1-phosphate: step 3/6. Its function is as follows. Catalyzes the enolization of 2,3-diketo-5-methylthiopentyl-1-phosphate (DK-MTP-1-P) into 2-hydroxy-3-keto-5-methylthiopentenyl-1-phosphate (HK-MTPenyl-1-P). The chain is 2,3-diketo-5-methylthiopentyl-1-phosphate enolase from Geobacillus thermodenitrificans (strain NG80-2).